A 290-amino-acid polypeptide reads, in one-letter code: MLRNKIDKIRLLFRKDRESYSCFYRILGFYPRNIRLYEQALLHKSTAVRSEKGRPLNNERLEFLGDAILDAIVGDIVYQHFEGKREGFLTNTRSKIVQRETLNKLAVEIGLDKLIKYSTRSSSHNSYMYGNAFEAFIGAIYLDRGYECCKQFMERRIIEPYIDLDKLSRKEVNFKSKLIEWSQKNKMEVSFELIEQSLDKENNPVFQTEVRIEGILGGSGTGYSKKESQQNAAQMTLKKIKGDPEFMASVQEAKTQNNVPAEDTTPESEMSLTAENQQIDEIISTEEISV.

The 126-residue stretch at 20–145 (YSCFYRILGF…FIGAIYLDRG (126 aa)) folds into the RNase III domain. E62 lines the Mg(2+) pocket. D66 is a catalytic residue. Mg(2+) contacts are provided by N131 and E134. The active site involves E134. The 70-residue stretch at 173 to 242 (NFKSKLIEWS…AQMTLKKIKG (70 aa)) folds into the DRBM domain. The interval 254–290 (KTQNNVPAEDTTPESEMSLTAENQQIDEIISTEEISV) is disordered. A compositionally biased stretch (polar residues) spans 267–279 (ESEMSLTAENQQI).

It belongs to the ribonuclease III family. As to quaternary structure, homodimer. Requires Mg(2+) as cofactor.

Its subcellular location is the cytoplasm. The enzyme catalyses Endonucleolytic cleavage to 5'-phosphomonoester.. Its function is as follows. Digests double-stranded RNA. Involved in the processing of primary rRNA transcript to yield the immediate precursors to the large and small rRNAs (23S and 16S). Processes some mRNAs, and tRNAs when they are encoded in the rRNA operon. Processes pre-crRNA and tracrRNA of type II CRISPR loci if present in the organism. The protein is Ribonuclease 3 of Bacteroides fragilis (strain YCH46).